The primary structure comprises 323 residues: uncharacterized protein (323 aa).

A run of 2 helical transmembrane segments spans residues 232-252 (LASYAGILMSGTGFLYMFIVL) and 267-287 (SLIVIQLLFSGIVLLILGVIG).

The protein belongs to the glycosyltransferase 2 family. GtrB subfamily.

It is found in the cell membrane. This is an uncharacterized protein from Bacillus subtilis (strain 168).